Consider the following 637-residue polypeptide: MSEVKQYEGREYDVIVVGAGHAGSEAALAAARMGNKTLLMTINLDMVAFMPCNPSIGGPAKGIVVREIDALGGEMGRNIDKTYVQMRMLNTGKGPAVRALRAQADKHAYHAEMKKTIEAEPNLTLRQGIVDDLIVEDGVCKGVITNTGARYQAKSVVLTLGTAARGKIIIGELQYSSGPNNSQAALELTKNLTEKYHFDLERFKTGTPPRVDGGTINYDETEEQPGDEVPNHFSFQTPDSKYIELKNQLSCWLTYTNEKTHEIIRENLDRAPMFSGMIEGVGPRYCPSIEDKIVRFADKSRHQLFLEPEGRKTDEWYVQGLSTSMPEEVQQQILHSIKGLEEAEMMRPGYAIEYDVVAPYQLKNTLETKLVKNLYTAGQTNGTSGYEEAAGQGLIAGINAGRRALGKEPLTLKRSDAYIGVMIDDLVTKGTKEPYRLLTSRAEYRLILRHDNADLRLTEVGHNLGLVSDEEYNAFLEKKQDIKDELQRLSEIRIKPSQVQKFLESKGSNGLKDGVLASEFLRRPEVNYSDLLKFIDAPEKDLDRRVIEQVEIETKYAGYIKKAQDRVDRLKRMEEKAIPDRIDYEAINGLATEGRQKLEKIRPTTIAQASRISGVTPADIAILSVYIQQGKIAKIAE.

18 to 23 (GAGHAG) provides a ligand contact to FAD. NAD(+) is bound at residue 282-296 (GPRYCPSIEDKIVRF).

It belongs to the MnmG family. As to quaternary structure, homodimer. Heterotetramer of two MnmE and two MnmG subunits. It depends on FAD as a cofactor.

Its subcellular location is the cytoplasm. Functionally, NAD-binding protein involved in the addition of a carboxymethylaminomethyl (cmnm) group at the wobble position (U34) of certain tRNAs, forming tRNA-cmnm(5)s(2)U34. This chain is tRNA uridine 5-carboxymethylaminomethyl modification enzyme MnmG, found in Pediococcus pentosaceus (strain ATCC 25745 / CCUG 21536 / LMG 10740 / 183-1w).